Reading from the N-terminus, the 310-residue chain is Protoheme IX farnesyltransferase (310 aa).

The next 9 helical transmembrane spans lie at 37 to 57 (LITV…DVLL), 64 to 84 (LTLL…CYLN), 113 to 133 (ILAL…IVNH), 134 to 154 (VAAV…TMWL), 159 to 181 (TINT…AAVT), 186 to 208 (IDAW…ALAM), 215 to 237 (RAAG…QIVW), 257 to 277 (MLVM…GLKI), and 290 to 310 (MFFF…LVSL).

This sequence belongs to the UbiA prenyltransferase family. Protoheme IX farnesyltransferase subfamily. In terms of assembly, interacts with CtaA.

The protein localises to the cell membrane. It catalyses the reaction heme b + (2E,6E)-farnesyl diphosphate + H2O = Fe(II)-heme o + diphosphate. The protein operates within porphyrin-containing compound metabolism; heme O biosynthesis; heme O from protoheme: step 1/1. Functionally, converts heme B (protoheme IX) to heme O by substitution of the vinyl group on carbon 2 of heme B porphyrin ring with a hydroxyethyl farnesyl side group. This chain is Protoheme IX farnesyltransferase, found in Exiguobacterium sibiricum (strain DSM 17290 / CCUG 55495 / CIP 109462 / JCM 13490 / 255-15).